Reading from the N-terminus, the 671-residue chain is DNA ligase (671 aa).

NAD(+) is bound by residues 32–36 (DAEYD), 81–82 (SL), and Glu-113. Lys-115 serves as the catalytic N6-AMP-lysine intermediate. Positions 136, 173, 290, and 314 each coordinate NAD(+). Residues Cys-408, Cys-411, Cys-426, and Cys-432 each coordinate Zn(2+). In terms of domain architecture, BRCT spans 593-671 (EIDSPFAGKT…EAEMLRLLGS (79 aa)).

It belongs to the NAD-dependent DNA ligase family. LigA subfamily. Mg(2+) is required as a cofactor. It depends on Mn(2+) as a cofactor.

The enzyme catalyses NAD(+) + (deoxyribonucleotide)n-3'-hydroxyl + 5'-phospho-(deoxyribonucleotide)m = (deoxyribonucleotide)n+m + AMP + beta-nicotinamide D-nucleotide.. In terms of biological role, DNA ligase that catalyzes the formation of phosphodiester linkages between 5'-phosphoryl and 3'-hydroxyl groups in double-stranded DNA using NAD as a coenzyme and as the energy source for the reaction. It is essential for DNA replication and repair of damaged DNA. This chain is DNA ligase, found in Shigella dysenteriae serotype 1 (strain Sd197).